The primary structure comprises 462 residues: Ammonium transporter Rh type B (462 aa).

The Cytoplasmic portion of the chain corresponds to 1–11 (MTDPSTNMRLK). A helical membrane pass occupies residues 12–32 (LPITCFILQIILIILFGVLVQ). Over 33–62 (YDEDTDAKKHHHGNHSESKSDIENDFYYRY) the chain is Extracellular. An N-linked (GlcNAc...) asparagine glycan is attached at Asn-46. Residues 63–83 (PSFQDVHVMIFVGFGFLMTFL) traverse the membrane as a helical segment. Over 84-94 (QRYGFSSVGFN) the chain is Cytoplasmic. Residues 95 to 115 (FLIAAFSLQWATLMQGFFHGL) form a helical membrane-spanning segment. Over 116–125 (HEGKIHIGVE) the chain is Extracellular. A helical transmembrane segment spans residues 126 to 146 (SMINADFCTGSVLISFGAVLG). The Cytoplasmic portion of the chain corresponds to 147-152 (KTSPVQ). The chain crosses the membrane as a helical span at residues 153 to 173 (LLFMAVFEVTLFAVNEFILLT). The Extracellular portion of the chain corresponds to 174–180 (LLGTKDA). Residues 181 to 201 (GGSMTIHTFGAYFGLMVTRIL) form a helical membrane-spanning segment. The Cytoplasmic portion of the chain corresponds to 202–220 (YRPNLDKSKHKNCSVYHSD). Residues 221 to 241 (LFAMIGTLYLWMFWPSFNSAV) traverse the membrane as a helical segment. Over 242 to 302 (TEHGDPQHRT…VAAGTAGEMM (61 aa)) the chain is Extracellular. Residues 303–323 (LTPFGSMIVGFLAGIISVLGF) form a helical membrane-spanning segment. Over 324–344 (KYLTPILENKLKIQDTCGIHN) the chain is Cytoplasmic. A helical membrane pass occupies residues 345–365 (LHGMPGVLGAIVGAVTASLAS). The Extracellular portion of the chain corresponds to 366–395 (KEVYGEGLEKVFPDVASGKRTASDQGGVQA). Residues 396 to 416 (ISLAVTLGMALFGGLIVGFIL) form a helical membrane-spanning segment. Topologically, residues 417 to 462 (KLPIFGAPRDTTCFEDSLYWEVPGEEESHEDQLTTVKTEESDKLNS) are cytoplasmic. Residues 441 to 462 (EEESHEDQLTTVKTEESDKLNS) form a disordered region. Positions 453 to 462 (KTEESDKLNS) are enriched in basic and acidic residues.

This sequence belongs to the ammonium transporter (TC 2.A.49) family. Rh subfamily.

It localises to the basolateral cell membrane. It is found in the cytoplasmic vesicle membrane. Functions as an ammonia transporter. May play a role in the elimination of ammonia in the gill. This Oryzias latipes (Japanese rice fish) protein is Ammonium transporter Rh type B (rhbg).